Consider the following 514-residue polypeptide: Protein spinster homolog 3 (514 aa).

The disordered stretch occupies residues 1–22 (MSTECLKPQTGGPQSQSLSQGG). The segment covering 9-21 (QTGGPQSQSLSQG) has biased composition (low complexity). The next 12 helical transmembrane spans lie at 54 to 74 (VLCYINLLNYMNWFIIPGVLL), 88 to 108 (GLLQTVFISCLLVSAPVFGYL), 116 to 136 (AILSFGILLWSGAGLSSSFIS), 149 to 169 (FVGTGAASYSTIAPTVLGDLF), 176 to 196 (CALAVFYIFIPVGSGLGYVLG), 212 to 232 (LMPCLDAMALALLILLVPDVP), 264 to 284 (FVFSTLGVTAIAFVTGALGFW), 313 to 333 (LIFGALTVATGIIGVMLGAEA), 347 to 367 (LICASSLFATAPCLYLALILA), 376 to 396 (VFLALGELLLSCNWAVVADIL), 415 to 435 (VAHVLGDAGSPYLTGLISSVL), and 453 to 473 (SFLCCAFAIVLGGGFFLLTAL). Positions 482–514 (ARQPGKGTLDSKDIASRNTESQGLLSGTSTPTE) are disordered. Residues 497–514 (SRNTESQGLLSGTSTPTE) show a composition bias toward polar residues.

The protein belongs to the major facilitator superfamily. Spinster (TC 2.A.1.49) family.

The protein resides in the membrane. Functionally, sphingolipid transporter. The protein is Protein spinster homolog 3 (Spns3) of Mus musculus (Mouse).